Reading from the N-terminus, the 195-residue chain is Protein RD3 (195 aa).

Residues 22-54 (AEMVLETLMMELAGQMREVERQQRERRSAVRKI) are a coiled coil. Over residues 168-177 (TISEDVERDA) the composition is skewed to basic and acidic residues. The interval 168-195 (TISEDVERDAPPPPRTWSMPEFRAPQAD) is disordered.

As to quaternary structure, monomer. Interacts with GUCY2E; promotes the exit of GUCY2E from the endoplasmic reticulum and its trafficking to the photoreceptor outer segments. The interaction with GUCY2E negatively regulates its activity. Interacts with GUCY2F; promotes the exit of GUCY2F from the endoplasmic reticulum and its trafficking to the photoreceptor outer segments. The interaction with GUCY2F negatively regulates its activity. Interacts with GUK1; up-regulates GUK1 activity. In terms of tissue distribution, expressed in the retina and in particular in the inner nuclear layer, in rod and cone outer segments, in the outer nuclear layer, in the outer plexiform layer and in the ganglion cell layer.

It localises to the cell projection. Its subcellular location is the cilium. The protein localises to the photoreceptor outer segment. It is found in the photoreceptor inner segment. The protein resides in the endosome. It localises to the nucleus. Its subcellular location is the cytoplasm. The protein localises to the perinuclear region. In terms of biological role, plays a critical role in the regulation of enzymes involved in nucleotide cycle in photoreceptors. Inhibits the basal catalytic activity and the GCAP-stimulated activity of GUCY2E and GUCY2F, two retinal guanylyl cyclases involved in the production of cGMP in photoreceptors. Involved in the transport of GUCY2E and GUCY2F to their target sites in the photoreceptor outer segment. Up-regulates the activity of GUK1, a kinase that also plays an essential role for recycling GMP and indirectly, cGMP. Plays an important role for the survival of rods and cones in the retina. The chain is Protein RD3 (Rd3) from Mus musculus (Mouse).